The following is a 66-amino-acid chain: Ejaculatory bulb-specific protein 2 (66 aa).

Residues 1 to 20 form the signal peptide; the sequence is MIRILVLMITFTLMTGSALC.

In terms of tissue distribution, specifically expressed in the ejaculatory bulb and seminal fluid.

Its subcellular location is the secreted. Protein component of the posterior mating plug. This chain is Ejaculatory bulb-specific protein 2, found in Drosophila melanogaster (Fruit fly).